The following is a 37-amino-acid chain: Myo-inositol-binding protein (37 aa).

Belongs to the bacterial solute-binding protein 2 family.

The protein resides in the periplasm. The polypeptide is Myo-inositol-binding protein (Pseudomonas sp).